The primary structure comprises 578 residues: MILSLFKLFGKENFFIQDSYLESPILWIDSTILIQVIGFLKKNNTCSYEILFDLFGIDERTRKNVKSFPNADFTVSYYFFSISNNSDLILKVALLKEHLQLPTISSIFLNANWYEREIWDMFGIVFNNHPYLTRILMPKNWVGHPLRKDYSSHATEFDEFYFTKQKEDLAMESLKFCPKSWGLENNDSNNSEYMFLNFGPNHPSSHGAFRIVLQLHGEKIINCIPDIGYHHRGAEKIAERQTWHSYIPYTDRIEYLGGCVNEMPYILAVEKLAGIVVPEKVQVIRILLSELFRINSHLLFLSTFIQDIGSMSTVFLAFTDRQKIYDLIESITGARMHPAWFRIGGVAKDLPKNWNSLLKKFLIWMPKRLDYYVNIAIKNKILISRSKGIAAYGKKEALSWGITGAGLRATGVNFDVRKNRPYSGYQNFDFEVPIGNNISDAYTRVLLKIEEIRQSLKILNQCLLHMPLGSYKSDHPLSTPQKKNKSLFHIERMITHFLQMSWGPIIPSNESFQMIEATKGINSYYLISDGLTTSYRTRIRTPSFAHLQQIPSVIRGYVISDLIVYLGSIDFVMSDVDR.

The tract at residues 1–167 (MILSLFKLFG…DEFYFTKQKE (167 aa)) is NADH dehydrogenase I subunit C. The NADH dehydrogenase I subunit D stretch occupies residues 192–578 (EYMFLNFGPN…IDFVMSDVDR (387 aa)).

The protein in the N-terminal section; belongs to the complex I 30 kDa subunit family. In the C-terminal section; belongs to the complex I 49 kDa subunit family. NDH-1 is composed of 13 different subunits. Subunits NuoB, CD, E, F, and G constitute the peripheral sector of the complex.

Its subcellular location is the cell inner membrane. It carries out the reaction a quinone + NADH + 5 H(+)(in) = a quinol + NAD(+) + 4 H(+)(out). In terms of biological role, NDH-1 shuttles electrons from NADH, via FMN and iron-sulfur (Fe-S) centers, to quinones in the respiratory chain. The immediate electron acceptor for the enzyme in this species is believed to be ubiquinone. Couples the redox reaction to proton translocation (for every two electrons transferred, four hydrogen ions are translocated across the cytoplasmic membrane), and thus conserves the redox energy in a proton gradient. The sequence is that of NADH-quinone oxidoreductase subunit C/D from Buchnera aphidicola subsp. Cinara cedri (strain Cc).